We begin with the raw amino-acid sequence, 395 residues long: 8-amino-7-oxononanoate synthase (395 aa).

Arg-24 is a binding site for substrate. 111-112 contributes to the pyridoxal 5'-phosphate binding site; that stretch reads GF. His-136 is a binding site for substrate. Pyridoxal 5'-phosphate is bound by residues Ser-184, 209–212, and 240–243; these read DDAH and TLSK. N6-(pyridoxal phosphate)lysine is present on Lys-243. Thr-357 contributes to the substrate binding site.

The protein belongs to the class-II pyridoxal-phosphate-dependent aminotransferase family. BioF subfamily. As to quaternary structure, homodimer. Requires pyridoxal 5'-phosphate as cofactor.

It catalyses the reaction 6-carboxyhexanoyl-[ACP] + L-alanine + H(+) = (8S)-8-amino-7-oxononanoate + holo-[ACP] + CO2. It participates in cofactor biosynthesis; biotin biosynthesis. Functionally, catalyzes the decarboxylative condensation of pimeloyl-[acyl-carrier protein] and L-alanine to produce 8-amino-7-oxononanoate (AON), [acyl-carrier protein], and carbon dioxide. In Thermoanaerobacter pseudethanolicus (strain ATCC 33223 / 39E) (Clostridium thermohydrosulfuricum), this protein is 8-amino-7-oxononanoate synthase.